Consider the following 199-residue polypeptide: V-set and transmembrane domain-containing protein 5 (199 aa).

The first 27 residues, 1–27 (MRPLRCGERTQGIPLGLLAFWVTAARC), serve as a signal peptide directing secretion. Topologically, residues 28–146 (LQSQGVSLYI…VSEIRYEDLH (119 aa)) are extracellular. The 104-residue stretch at 35-138 (LYIPQSAINA…QSGTILLRVS (104 aa)) folds into the Ig-like C2-type domain. N-linked (GlcNAc...) asparagine glycans are attached at residues asparagine 43, asparagine 87, and asparagine 101. The helical transmembrane segment at 147–167 (FVAVFFALLAAVAVVLISLMW) threads the bilayer. The Cytoplasmic portion of the chain corresponds to 168–199 (VCNQCAYKFQRKRRYKLKESTTEEIEMKEVEC). The tract at residues 169–185 (CNQCAYKFQRKRRYKLK) is important for CDC42-dependent filopodia induction.

As to quaternary structure, can homooligomerize through cis interactions within the same cell membrane. Post-translationally, N-glycosylated. In terms of tissue distribution, highly expressed in the central nervous system (CNS), with the highest expression in thalamus, hippocampus, cerebrum, midbrain and spinal cord. Also highly expressed in stomach, kidney and small intestine.

It is found in the cell membrane. Its subcellular location is the cell projection. The protein localises to the dendrite. The protein resides in the axon. Cell adhesion-like membrane protein of the central nervous system (CNS) which modulates both the position and complexity of central neurons by altering their membrane morphology and dynamics. Involved in the formation of neuronal dendrites and protrusions including dendritic filopodia. In synaptogenesis, regulates synapse formation by altering dendritic spine morphology and actin distribution. Promotes formation of unstable neuronal spines such as thin and branched types. Regulates neuronal morphogenesis and migration during cortical development in the brain. This chain is V-set and transmembrane domain-containing protein 5, found in Mus musculus (Mouse).